The following is a 242-amino-acid chain: Uridylate kinase (242 aa).

11–14 (KLSG) lines the ATP pocket. Gly53 serves as a coordination point for UMP. ATP contacts are provided by Gly54 and Arg58. Residues Asp73 and 134–141 (SGNPFFTT) contribute to the UMP site. Residues Thr161, Tyr167, and Asp170 each coordinate ATP.

This sequence belongs to the UMP kinase family. In terms of assembly, homohexamer.

It is found in the cytoplasm. It carries out the reaction UMP + ATP = UDP + ADP. It participates in pyrimidine metabolism; CTP biosynthesis via de novo pathway; UDP from UMP (UMPK route): step 1/1. Inhibited by UTP. In terms of biological role, catalyzes the reversible phosphorylation of UMP to UDP. The sequence is that of Uridylate kinase from Thermosynechococcus vestitus (strain NIES-2133 / IAM M-273 / BP-1).